We begin with the raw amino-acid sequence, 359 residues long: Alpha-2-HS-glycoprotein (359 aa).

A signal peptide spans methionine 1–serine 18. Residues tyrosine 27 to aspartate 133 enclose the Cystatin fetuin-A-type 1 domain. 6 disulfide bridges follow: cysteine 32-cysteine 350, cysteine 89-cysteine 100, cysteine 114-cysteine 132, cysteine 146-cysteine 149, cysteine 208-cysteine 219, and cysteine 230-cysteine 248. N-linked (GlcNAc...) asparagine glycosylation occurs at asparagine 99. Phosphoserine occurs at positions 134, 135, and 138. A Cystatin fetuin-A-type 2 domain is found at lysine 144 to valine 256. N-linked (GlcNAc...) asparagine glycans are attached at residues asparagine 156 and asparagine 176. The interval isoleucine 257 to glycine 285 is disordered. An O-linked (GalNAc...) serine glycan is attached at serine 271. Residues alanine 276–glycine 285 show a composition bias toward low complexity. O-linked (GalNAc...) threonine glycosylation is present at threonine 280. O-linked (GalNAc...) serine glycans are attached at residues serine 282 and serine 296. At threonine 314 the chain carries Phosphothreonine. Phosphoserine occurs at positions 316, 320, 323, and 325. Residue threonine 334 is glycosylated (O-linked (GalNAc...) threonine). A glycan (O-linked (GalNAc...) serine; partial) is linked at serine 341.

The protein belongs to the fetuin family. Phosphorylated by FAM20C in the extracellular medium. As to expression, liver and bone.

It is found in the secreted. In terms of biological role, promotes endocytosis, possesses opsonic properties and influences the mineral phase of bone. Suggested to have lymphocyte stimulating properties, lipid binding capability and to bind thyroid hormone. The polypeptide is Alpha-2-HS-glycoprotein (AHSG) (Bos taurus (Bovine)).